We begin with the raw amino-acid sequence, 209 residues long: Large ribosomal subunit protein bL9 (209 aa).

The interval 169–209 (RDGASFTEDYDPNAEPGLATEAEEAVADADDNAETNSEESL) is disordered. Over residues 189-209 (EAEEAVADADDNAETNSEESL) the composition is skewed to acidic residues.

The protein belongs to the bacterial ribosomal protein bL9 family.

In terms of biological role, binds to the 23S rRNA. The protein is Large ribosomal subunit protein bL9 of Zymomonas mobilis subsp. mobilis (strain ATCC 31821 / ZM4 / CP4).